The sequence spans 310 residues: tRNA dimethylallyltransferase (310 aa).

14–21 lines the ATP pocket; the sequence is GPTASGKS. A substrate-binding site is contributed by 16 to 21; sequence TASGKS. Interaction with substrate tRNA regions lie at residues 39–42 and 163–167; these read DSMQ and QRIVR.

The protein belongs to the IPP transferase family. Monomer. The cofactor is Mg(2+).

The catalysed reaction is adenosine(37) in tRNA + dimethylallyl diphosphate = N(6)-dimethylallyladenosine(37) in tRNA + diphosphate. Catalyzes the transfer of a dimethylallyl group onto the adenine at position 37 in tRNAs that read codons beginning with uridine, leading to the formation of N6-(dimethylallyl)adenosine (i(6)A). The polypeptide is tRNA dimethylallyltransferase (Brucella abortus (strain S19)).